The primary structure comprises 102 residues: Feather keratin (102 aa).

An N-acetylserine modification is found at S1.

This sequence belongs to the avian keratin family. The avian keratins (F-ker, S-ker, C-ker and B-ker) are a complex mixture of very similar polypeptides.

The chain is Feather keratin from Dromaius novaehollandiae (Emu).